The chain runs to 766 residues: Leucine-rich repeat and fibronectin type III domain-containing protein 1 (766 aa).

The N-terminal stretch at Met1–Gly31 is a signal peptide. The LRRNT domain occupies Gln32–Arg65. The Extracellular portion of the chain corresponds to Gln32–Met536. LRR repeat units lie at residues Arg66–Asn87, Ser90–Asp111, Ala114–Gly135, Asn138–Ala159, Thr163–Gln184, Asn187–Gln208, and Lys211–Leu232. The N-linked (GlcNAc...) asparagine glycan is linked to Asn87. One can recognise an LRRCT domain in the interval Asn252 to Pro298. The 88-residue stretch at Pro299–Cys386 folds into the Ig-like domain. Cysteines 321 and 370 form a disulfide. Asn343 is a glycosylation site (N-linked (GlcNAc...) asparagine). Residues Pro397–Ser424 form a disordered region. A Fibronectin type-III domain is found at Ser424–Asp520. The helical transmembrane segment at Ile537 to Ile557 threads the bilayer. Topologically, residues Arg558–Val766 are cytoplasmic. Disordered regions lie at residues Arg568–Pro601 and Leu645–Gly742. Position 713 is a phosphoserine (Ser713). Residues Tyr714–Thr727 are compositionally biased toward basic residues. The short motif at Glu763–Val766 is the PDZ-binding element.

It belongs to the LRFN family. As to quaternary structure, can form heteromeric complexes with LRFN2, LRFN3, LRFN4 and LRFN5. Forms homomeric complexes, but not across cell junctions. Interacts with DLG4. Also interacts with DLG1, DLG2, and DLG3. Interacts with 2 AMPA receptor subunits GRIA1 and GRIA2 and NMDA receptor subunit GRIN1. Post-translationally, glycosylated. Predominantly expressed in the brain, with a weak, but broad expression in the cerebral cortex and diencephalic nuclei. Also detected in other parts of the central nervous system, including the olfactory bulb, pons, cerebellum, and medulla oblongata, as well as in the peripheral nervous system, such as the ganglia of cranial nerves and the dorsal root ganglion during gestation.

Its subcellular location is the membrane. It is found in the synapse. It localises to the postsynaptic density membrane. Functionally, promotes neurite outgrowth in hippocampal neurons. Involved in the regulation and maintenance of excitatory synapses. Induces the clustering of excitatory postsynaptic proteins, including DLG4, DLGAP1, GRIA1 and GRIN1. This is Leucine-rich repeat and fibronectin type III domain-containing protein 1 (Lrfn1) from Mus musculus (Mouse).